A 567-amino-acid chain; its full sequence is Chitinase 3 (567 aa).

The first 16 residues, 1–16 (MLYLLTIFSLLLPALA), serve as a signal peptide directing secretion. Positions 23–313 (SNVAVYWGQN…ENMKAIVKKA (291 aa)) constitute a GH18 domain. Glu157 functions as the Proton donor in the catalytic mechanism. Asn159 carries an N-linked (GlcNAc...) asparagine glycan. The segment at 313-471 (ASPGEETTSS…TSALSSSTTT (159 aa)) is disordered. Low complexity-rich tracts occupy residues 319 to 436 (TTSS…SLSS) and 444 to 471 (STTT…STTT).

It belongs to the glycosyl hydrolase 18 family. Chitinase class III subfamily.

The protein localises to the secreted. It catalyses the reaction Random endo-hydrolysis of N-acetyl-beta-D-glucosaminide (1-&gt;4)-beta-linkages in chitin and chitodextrins.. Its function is as follows. Chitinase involved in the remodeling of chitin in the fungal cell wall. Plays a role in cell separation. This is Chitinase 3 (CHT3) from Candida albicans (strain SC5314 / ATCC MYA-2876) (Yeast).